A 179-amino-acid polypeptide reads, in one-letter code: UPF0303 protein YBR137W (179 aa).

This sequence belongs to the UPF0303 family.

It localises to the cytoplasm. This Saccharomyces cerevisiae (strain ATCC 204508 / S288c) (Baker's yeast) protein is UPF0303 protein YBR137W.